We begin with the raw amino-acid sequence, 87 residues long: Putative acyl-CoA-binding protein (87 aa).

Positions 1–86 (MSSTFEQAAA…VDELKTKYGM (86 aa)) constitute an ACB domain. Residues Lys-13, 28-32 (YALFK), Lys-50, Lys-54, and Tyr-73 each bind an acyl-CoA.

The protein belongs to the ACBP family.

Its subcellular location is the cytoplasm. It is found in the nucleus. Its function is as follows. Binds medium- and long-chain acyl-CoA esters with very high affinity and may function as an intracellular carrier of acyl-CoA esters. May enhance the activity of the ceramide synthase complex. This Schizosaccharomyces pombe (strain 972 / ATCC 24843) (Fission yeast) protein is Putative acyl-CoA-binding protein.